The primary structure comprises 1414 residues: DNA-directed RNA polymerase subunit beta' (1414 aa).

Positions 70, 72, 85, and 88 each coordinate Zn(2+). Mg(2+)-binding residues include aspartate 460, aspartate 462, and aspartate 464. Zn(2+)-binding residues include cysteine 814, cysteine 888, cysteine 895, and cysteine 898. The span at 1392–1403 shows a compositional bias: low complexity; the sequence is EQALSEALKSSA. A disordered region spans residues 1392-1414; it reads EQALSEALKSSAPQEAKAAQKDE.

This sequence belongs to the RNA polymerase beta' chain family. In terms of assembly, the RNAP catalytic core consists of 2 alpha, 1 beta, 1 beta' and 1 omega subunit. When a sigma factor is associated with the core the holoenzyme is formed, which can initiate transcription. Mg(2+) is required as a cofactor. Zn(2+) serves as cofactor.

The enzyme catalyses RNA(n) + a ribonucleoside 5'-triphosphate = RNA(n+1) + diphosphate. In terms of biological role, DNA-dependent RNA polymerase catalyzes the transcription of DNA into RNA using the four ribonucleoside triphosphates as substrates. The protein is DNA-directed RNA polymerase subunit beta' of Coxiella burnetii (strain RSA 331 / Henzerling II).